The primary structure comprises 254 residues: Proteasome subunit alpha type-7 (254 aa).

O-linked (GlcNAc) serine glycosylation is present at serine 136. Phosphotyrosine is present on tyrosine 159. Lysine 233 is modified (N6-acetyllysine).

The protein belongs to the peptidase T1A family. As to quaternary structure, the 26S proteasome consists of a 20S proteasome core and two 19S regulatory subunits. The 20S proteasome core is a barrel-shaped complex made of 28 subunits that are arranged in four stacked rings. The two outer rings are each formed by seven alpha subunits, and the two inner rings are formed by seven beta subunits. The proteolytic activity is exerted by three beta-subunits PSMB5, PSMB6 and PSMB7. PSMA7 interacts directly with the PSMG1-PSMG2 heterodimer which promotes 20S proteasome assembly. Interacts with HIF1A. Interacts with RAB7A. Interacts with PRKN. Interacts with ABL1 and ABL2. Interacts with EMAP2. Interacts with MAVS. As to expression, ubiquitous.

It is found in the cytoplasm. It localises to the nucleus. Component of the 20S core proteasome complex involved in the proteolytic degradation of most intracellular proteins. This complex plays numerous essential roles within the cell by associating with different regulatory particles. Associated with two 19S regulatory particles, forms the 26S proteasome and thus participates in the ATP-dependent degradation of ubiquitinated proteins. The 26S proteasome plays a key role in the maintenance of protein homeostasis by removing misfolded or damaged proteins that could impair cellular functions, and by removing proteins whose functions are no longer required. Associated with the PA200 or PA28, the 20S proteasome mediates ubiquitin-independent protein degradation. This type of proteolysis is required in several pathways including spermatogenesis (20S-PA200 complex) or generation of a subset of MHC class I-presented antigenic peptides (20S-PA28 complex). Inhibits the transactivation function of HIF-1A under both normoxic and hypoxia-mimicking conditions. The interaction with EMAP2 increases the proteasome-mediated HIF-1A degradation under the hypoxic conditions. Plays a role in hepatitis C virus internal ribosome entry site-mediated translation. Mediates nuclear translocation of the androgen receptor (AR) and thereby enhances androgen-mediated transactivation. Promotes MAVS degradation and thereby negatively regulates MAVS-mediated innate immune response. The chain is Proteasome subunit alpha type-7 (Psma7) from Rattus norvegicus (Rat).